The primary structure comprises 166 residues: Testis-expressed protein 51 (166 aa).

The first 15 residues, 1 to 15, serve as a signal peptide directing secretion; sequence MLPLLIICLLPAIEG. Residues 138–154 form a helical membrane-spanning segment; that stretch reads SLWAVSLSSALLLAIAG.

It localises to the membrane. The sequence is that of Testis-expressed protein 51 from Homo sapiens (Human).